Consider the following 376-residue polypeptide: Glutamate 5-kinase (376 aa).

Lys15 is a binding site for ATP. Positions 56, 143, and 155 each coordinate substrate. 175-176 contributes to the ATP binding site; that stretch reads SD. The 78-residue stretch at 281-358 folds into the PUA domain; it reads KGTLTIDAGA…PDVMSILGVS (78 aa).

This sequence belongs to the glutamate 5-kinase family.

It localises to the cytoplasm. It catalyses the reaction L-glutamate + ATP = L-glutamyl 5-phosphate + ADP. It functions in the pathway amino-acid biosynthesis; L-proline biosynthesis; L-glutamate 5-semialdehyde from L-glutamate: step 1/2. In terms of biological role, catalyzes the transfer of a phosphate group to glutamate to form L-glutamate 5-phosphate. This Rhodopseudomonas palustris (strain HaA2) protein is Glutamate 5-kinase.